Consider the following 330-residue polypeptide: tRNA U34 carboxymethyltransferase (330 aa).

Residues Lys-91, Trp-105, Lys-110, Gly-130, 152-154 (DPS), 181-182 (IE), Met-196, Tyr-200, and Arg-315 contribute to the carboxy-S-adenosyl-L-methionine site.

This sequence belongs to the class I-like SAM-binding methyltransferase superfamily. CmoB family. In terms of assembly, homotetramer.

The catalysed reaction is carboxy-S-adenosyl-L-methionine + 5-hydroxyuridine(34) in tRNA = 5-carboxymethoxyuridine(34) in tRNA + S-adenosyl-L-homocysteine + H(+). Its function is as follows. Catalyzes carboxymethyl transfer from carboxy-S-adenosyl-L-methionine (Cx-SAM) to 5-hydroxyuridine (ho5U) to form 5-carboxymethoxyuridine (cmo5U) at position 34 in tRNAs. This chain is tRNA U34 carboxymethyltransferase, found in Shewanella piezotolerans (strain WP3 / JCM 13877).